A 101-amino-acid polypeptide reads, in one-letter code: UPF0473 protein spr0177 (101 aa).

Belongs to the UPF0473 family.

This chain is UPF0473 protein spr0177, found in Streptococcus pneumoniae (strain ATCC BAA-255 / R6).